A 406-amino-acid polypeptide reads, in one-letter code: Probable endo-xylogalacturonan hydrolase A (406 aa).

The first 18 residues, 1–18 (MLYPRNLALFSLLSLSSA), serve as a signal peptide directing secretion. PbH1 repeat units follow at residues 183–213 (TQHV…DIGA), 214–235 (STHV…AFKP), 237–257 (SNYV…SVGS), and 299–320 (VKNV…QIES). The Proton donor role is filled by aspartate 228. Histidine 251 is a catalytic residue. The N-linked (GlcNAc...) asparagine glycan is linked to asparagine 301.

Belongs to the glycosyl hydrolase 28 family.

The protein localises to the secreted. Pectinolytic enzyme involved in the degradation of xylogalacturonan (xga), a galacturonan backbone heavily substituted with xylose, and which is one important component of the hairy regions of pectin. Activity requires a galacturonic acid backbone substituted with xylose. The polypeptide is Probable endo-xylogalacturonan hydrolase A (xghA) (Aspergillus fumigatus (strain ATCC MYA-4609 / CBS 101355 / FGSC A1100 / Af293) (Neosartorya fumigata)).